A 134-amino-acid chain; its full sequence is uncharacterized protein (134 aa).

The segment at 1–30 is disordered; that stretch reads MGTLQGAALRSRERPSWPQETHGHRERTEE. Residues 10-30 show a composition bias toward basic and acidic residues; it reads RSRERPSWPQETHGHRERTEE.

This is an uncharacterized protein from Homo sapiens (Human).